We begin with the raw amino-acid sequence, 174 residues long: Shikimate kinase 2 (174 aa).

Gly-12–Thr-17 is a binding site for ATP. Mg(2+) contacts are provided by Thr-16 and Asp-32. Asp-34, Arg-58, and Gly-79 together coordinate substrate. The tract at residues Glu-112 to Arg-126 is LID domain. Position 120 (Arg-120) interacts with ATP. Residue Arg-139 participates in substrate binding. Gln-155 contributes to the ATP binding site.

It belongs to the shikimate kinase family. AroL subfamily. As to quaternary structure, monomer. Requires Mg(2+) as cofactor.

It localises to the cytoplasm. It carries out the reaction shikimate + ATP = 3-phosphoshikimate + ADP + H(+). It functions in the pathway metabolic intermediate biosynthesis; chorismate biosynthesis; chorismate from D-erythrose 4-phosphate and phosphoenolpyruvate: step 5/7. Its function is as follows. Catalyzes the specific phosphorylation of the 3-hydroxyl group of shikimic acid using ATP as a cosubstrate. This chain is Shikimate kinase 2, found in Erwinia tasmaniensis (strain DSM 17950 / CFBP 7177 / CIP 109463 / NCPPB 4357 / Et1/99).